A 431-amino-acid chain; its full sequence is Protein PIN-LIKES 6 (431 aa).

Over 1–29 (MIARILAALADSMEMPVAAGGGSVLGTIK) the chain is Lumenal. A helical transmembrane segment spans residues 30 to 50 (IAVMPIAKVFTMCFLGLLMAS). Residues 51-66 (KYVNILPPSGRKLLNG) are Cytoplasmic-facing. The helical transmembrane segment at 67-87 (LVFSLLLPCLIFSQLGQAVTL) threads the bilayer. The Lumenal portion of the chain corresponds to 88–93 (QKMLQW). Residues 94 to 114 (WFIPVNVVLGTISGSIIGFIV) form a helical membrane-spanning segment. The Cytoplasmic portion of the chain corresponds to 115 to 128 (ASIVRPPYPYFKFT). Residues 129-149 (IIQIGVGNIGNVPLVLLAALC) form a helical membrane-spanning segment. Residues 150–169 (RDTSNPFGDSEKCSIDGTAY) lie on the Lumenal side of the membrane. A helical transmembrane segment spans residues 170–190 (ISFGQWVGAIILYTYVYQMFA). At 191 to 268 (PPPEGFDAEE…FLYEKLKLKQ (78 aa)) the chain is on the cytoplasmic side. A helical transmembrane segment spans residues 269-289 (IVQPAIVASILAMILGAIPFT). Residues 290 to 306 (KKLIFTNGAPLFFFTDS) are Lumenal-facing. Residues 307 to 327 (CMILGDAMIPCILLALGGNLI) traverse the membrane as a helical segment. The Cytoplasmic segment spans residues 328-340 (NGPGSSKLGFKTT). A helical membrane pass occupies residues 341 to 361 (AAIIIGRLVLVPPVGLGIVTV). Residues 362 to 376 (ADKLGFLPADDKMFR) are Lumenal-facing. A helical transmembrane segment spans residues 377 to 397 (FVLLLQHTMPTSVLSGAVANL). Over 398–406 (RGCGRESAA) the chain is Cytoplasmic. The chain crosses the membrane as a helical span at residues 407 to 427 (VLFWVHIFAIFSMAGWMVLYI). Over 428–431 (NILF) the chain is Lumenal.

It belongs to the auxin efflux carrier (TC 2.A.69.2) family. As to expression, expressed in seedlings, rosette and cauline leaves, stems and flowers.

It is found in the endoplasmic reticulum membrane. Its function is as follows. Involved in cellular auxin homeostasis by regulating auxin metabolism. Regulates intracellular auxin accumulation at the endoplasmic reticulum and thus auxin availability for nuclear auxin signaling. The polypeptide is Protein PIN-LIKES 6 (Arabidopsis thaliana (Mouse-ear cress)).